The sequence spans 94 residues: Small ribosomal subunit protein bS18 (94 aa).

The protein belongs to the bacterial ribosomal protein bS18 family. In terms of assembly, part of the 30S ribosomal subunit. Forms a tight heterodimer with protein bS6.

Functionally, binds as a heterodimer with protein bS6 to the central domain of the 16S rRNA, where it helps stabilize the platform of the 30S subunit. This is Small ribosomal subunit protein bS18 from Leptothrix cholodnii (strain ATCC 51168 / LMG 8142 / SP-6) (Leptothrix discophora (strain SP-6)).